The following is a 66-amino-acid chain: Large ribosomal subunit protein bL33c (66 aa).

The protein belongs to the bacterial ribosomal protein bL33 family.

The protein localises to the plastid. Its subcellular location is the chloroplast. This Nasturtium officinale (Watercress) protein is Large ribosomal subunit protein bL33c.